Reading from the N-terminus, the 786-residue chain is DNA ligase (786 aa).

NAD(+) is bound by residues 32 to 36 (DAEYD), 81 to 82 (SL), and Glu-121. Catalysis depends on Lys-123, which acts as the N6-AMP-lysine intermediate. NAD(+) contacts are provided by Arg-144, Glu-181, Lys-297, and Lys-321. Positions 415, 418, 445, and 451 each coordinate Zn(2+). In terms of domain architecture, BRCT spans 703–786 (AEGLPLAGQT…EQLKSYGIEA (84 aa)).

This sequence belongs to the NAD-dependent DNA ligase family. LigA subfamily. Requires Mg(2+) as cofactor. Mn(2+) is required as a cofactor.

It catalyses the reaction NAD(+) + (deoxyribonucleotide)n-3'-hydroxyl + 5'-phospho-(deoxyribonucleotide)m = (deoxyribonucleotide)n+m + AMP + beta-nicotinamide D-nucleotide.. Its function is as follows. DNA ligase that catalyzes the formation of phosphodiester linkages between 5'-phosphoryl and 3'-hydroxyl groups in double-stranded DNA using NAD as a coenzyme and as the energy source for the reaction. It is essential for DNA replication and repair of damaged DNA. This chain is DNA ligase, found in Ectopseudomonas mendocina (strain ymp) (Pseudomonas mendocina).